Consider the following 152-residue polypeptide: Large ribosomal subunit protein uL15 (152 aa).

The disordered stretch occupies residues 1–57 (MTSTLNTLKSNSGSRKKKLRKGRGIAAGQGASCGFGMRGQKSRSGRPTRPGFEGGQM). Residues 14 to 23 (SRKKKLRKGR) are compositionally biased toward basic residues. Over residues 25-37 (IAAGQGASCGFGM) the composition is skewed to gly residues.

This sequence belongs to the universal ribosomal protein uL15 family. In terms of assembly, part of the 50S ribosomal subunit.

Its function is as follows. Binds to the 23S rRNA. In Prochlorococcus marinus (strain AS9601), this protein is Large ribosomal subunit protein uL15.